Consider the following 162-residue polypeptide: Regulator of sigma D (162 aa).

It belongs to the Rsd/AlgQ family. Interacts with RpoD.

The protein localises to the cytoplasm. Binds RpoD and negatively regulates RpoD-mediated transcription activation by preventing the interaction between the primary sigma factor RpoD with the catalytic core of the RNA polymerase and with promoter DNA. May be involved in replacement of the RNA polymerase sigma subunit from RpoD to RpoS during the transition from exponential growth to the stationary phase. The sequence is that of Regulator of sigma D from Salmonella typhi.